The sequence spans 194 residues: Peptidyl-tRNA hydrolase (194 aa).

Tyrosine 17 contributes to the tRNA binding site. Histidine 22 (proton acceptor) is an active-site residue. Phenylalanine 68, asparagine 70, and asparagine 116 together coordinate tRNA.

This sequence belongs to the PTH family. In terms of assembly, monomer.

Its subcellular location is the cytoplasm. The enzyme catalyses an N-acyl-L-alpha-aminoacyl-tRNA + H2O = an N-acyl-L-amino acid + a tRNA + H(+). Hydrolyzes ribosome-free peptidyl-tRNAs (with 1 or more amino acids incorporated), which drop off the ribosome during protein synthesis, or as a result of ribosome stalling. Its function is as follows. Catalyzes the release of premature peptidyl moieties from peptidyl-tRNA molecules trapped in stalled 50S ribosomal subunits, and thus maintains levels of free tRNAs and 50S ribosomes. In Haemophilus ducreyi (strain 35000HP / ATCC 700724), this protein is Peptidyl-tRNA hydrolase.